Here is a 365-residue protein sequence, read N- to C-terminus: Isopentenyl-diphosphate delta-isomerase (365 aa).

8–9 provides a ligand contact to substrate; the sequence is RK. Residues 67 to 69, serine 97, and asparagine 126 each bind FMN; that span reads SIT. 97-99 contributes to the substrate binding site; sequence SQR. Glutamine 160 serves as a coordination point for substrate. Glutamate 161 lines the Mg(2+) pocket. FMN contacts are provided by residues lysine 192, threonine 222, 272 to 274, and 293 to 294; these read GIR and AL.

It belongs to the IPP isomerase type 2 family. As to quaternary structure, homooctamer. Dimer of tetramers. Requires FMN as cofactor. It depends on NADPH as a cofactor. The cofactor is Mg(2+).

The protein resides in the cytoplasm. It carries out the reaction isopentenyl diphosphate = dimethylallyl diphosphate. Its function is as follows. Involved in the biosynthesis of isoprenoids. Catalyzes the 1,3-allylic rearrangement of the homoallylic substrate isopentenyl (IPP) to its allylic isomer, dimethylallyl diphosphate (DMAPP). The polypeptide is Isopentenyl-diphosphate delta-isomerase (Methanosarcina mazei (strain ATCC BAA-159 / DSM 3647 / Goe1 / Go1 / JCM 11833 / OCM 88) (Methanosarcina frisia)).